Reading from the N-terminus, the 193-residue chain is MPIDKAKIEKAVRMILEAIGEDPEREGLRETPRRVADMFEELLEGYDFTEEYTWFTEATDLVVVSGIRFYSLCEHHLLPFFGVAHVAYLPRGKVIGLSKIVRIVNKYSRRLQIQERMTKQIADEISKATGSPDVMVITEAVHLCMAMRGVRNGAPTVVAAVRGEFERDQSLKEEVYRIIEPHRLSRVIALSFF.

The Zn(2+) site is built by Cys73, His76, and Cys144.

This sequence belongs to the GTP cyclohydrolase I family. As to quaternary structure, homomer.

The catalysed reaction is GTP + H2O = 7,8-dihydroneopterin 3'-triphosphate + formate + H(+). It functions in the pathway cofactor biosynthesis; 7,8-dihydroneopterin triphosphate biosynthesis; 7,8-dihydroneopterin triphosphate from GTP: step 1/1. This chain is GTP cyclohydrolase 1, found in Hyperthermus butylicus (strain DSM 5456 / JCM 9403 / PLM1-5).